The sequence spans 334 residues: Ferredoxin--NADP reductase (334 aa).

FAD is bound by residues Asp-32, Gln-40, Tyr-45, Val-85, Phe-120, Asp-287, and Thr-327.

This sequence belongs to the ferredoxin--NADP reductase type 2 family. Homodimer. It depends on FAD as a cofactor.

It carries out the reaction 2 reduced [2Fe-2S]-[ferredoxin] + NADP(+) + H(+) = 2 oxidized [2Fe-2S]-[ferredoxin] + NADPH. The chain is Ferredoxin--NADP reductase from Wolbachia pipientis subsp. Culex pipiens (strain wPip).